The following is a 474-amino-acid chain: B-cell CLL/lymphoma 6 member B protein (474 aa).

The 68-residue stretch at 38–105 folds into the BTB domain; the sequence is TDVTLLVGGQ…MYTSRLRLSP (68 aa). Disordered stretches follow at residues 144-190 and 210-249; these read PVEV…PDPK and GSLVGESSGQPCPQARLPSGDEACSSSSSSEEGTTPGLQS. Residues 150-160 are compositionally biased toward pro residues; the sequence is PRPPTVAPPGS. The span at 162-172 shows a compositional bias: basic and acidic residues; that stretch reads RRSEGHPDPPT. 3 stretches are compositionally biased toward polar residues: residues 173-183, 210-220, and 240-249; these read ESRSCSQGSPS, GSLVGESSGQP, and EEGTTPGLQS. 5 C2H2-type zinc fingers span residues 323 to 345, 351 to 373, 379 to 401, 407 to 429, and 435 to 458; these read YKCQLCRSAFRYKGNLASHRTVH, YRCSICGARFNRPANLKTHSRIH, YKCETCGSRFVQVAHLRAHVLIH, YPCPTCGTRFRHLQTLKSHVRIH, and YHCDPCGLHFRHKSQLRLHLRQKH.

Associates with BCL6 through the BTB domain. Ubiquitously expressed with higher expression found in heart and lung.

It localises to the nucleus. In terms of biological role, acts as a sequence-specific transcriptional repressor in association with BCL6. Necessary for activation of naive T-cells to antigenic stimulation. May attenuate the regulatory effect of BCL6 on antigenic activation of naive CD4 T-cells by forming a heterodimer with BCL6. This chain is B-cell CLL/lymphoma 6 member B protein (Bcl6b), found in Mus musculus (Mouse).